Here is a 326-residue protein sequence, read N- to C-terminus: MSTLEFIKECQEKVFSGNHITAEDAEKLLNIPEENLKDLARCANEITRDFNGEKVDVEQLNNIKKNACSEDCTFCGQSAFFDTGIETYQLPSPEEVVSKAQKAKEEGAESYCLVAAWREPSRTDFEKVCKIITEINDKVGISVECSLGFLTQEQAKKLKDLKVKRYNHNLETAKSKFPEICTTHTYEDRLETLGIARDAGLELCTGGIIGLGETREQRLELTLELARLYPEEVTINILVPVPGTPLELQTDLPNSEIVRMFSVIRFLLPESVIKISGGRETNLEDSGEELLQSGANGIITSGYLTMGGNEAQKDHAMIEKIGLKSQ.

The region spanning 50 to 279 (FNGEKVDVEQ…ESVIKISGGR (230 aa)) is the Radical SAM core domain. [4Fe-4S] cluster contacts are provided by Cys68, Cys72, and Cys75. [2Fe-2S] cluster-binding residues include Cys112, Cys145, Cys204, and Lys274.

This sequence belongs to the radical SAM superfamily. Biotin synthase family. As to quaternary structure, homodimer. Requires [4Fe-4S] cluster as cofactor. [2Fe-2S] cluster is required as a cofactor.

It catalyses the reaction (4R,5S)-dethiobiotin + (sulfur carrier)-SH + 2 reduced [2Fe-2S]-[ferredoxin] + 2 S-adenosyl-L-methionine = (sulfur carrier)-H + biotin + 2 5'-deoxyadenosine + 2 L-methionine + 2 oxidized [2Fe-2S]-[ferredoxin]. Its pathway is cofactor biosynthesis; biotin biosynthesis; biotin from 7,8-diaminononanoate: step 2/2. Functionally, catalyzes the conversion of dethiobiotin (DTB) to biotin by the insertion of a sulfur atom into dethiobiotin via a radical-based mechanism. The chain is Biotin synthase from Nitrosopumilus maritimus (strain SCM1).